Here is a 212-residue protein sequence, read N- to C-terminus: ATP phosphoribosyltransferase (212 aa).

It belongs to the ATP phosphoribosyltransferase family. Short subfamily. Heteromultimer composed of HisG and HisZ subunits.

The protein resides in the cytoplasm. The enzyme catalyses 1-(5-phospho-beta-D-ribosyl)-ATP + diphosphate = 5-phospho-alpha-D-ribose 1-diphosphate + ATP. It participates in amino-acid biosynthesis; L-histidine biosynthesis; L-histidine from 5-phospho-alpha-D-ribose 1-diphosphate: step 1/9. In terms of biological role, catalyzes the condensation of ATP and 5-phosphoribose 1-diphosphate to form N'-(5'-phosphoribosyl)-ATP (PR-ATP). Has a crucial role in the pathway because the rate of histidine biosynthesis seems to be controlled primarily by regulation of HisG enzymatic activity. This is ATP phosphoribosyltransferase from Clostridium botulinum (strain Okra / Type B1).